Here is a 248-residue protein sequence, read N- to C-terminus: 14-3-3 protein sigma (248 aa).

Phosphoserine is present on residues Ser5, Ser74, and Ser248.

Belongs to the 14-3-3 family. Homodimer. Interacts with KRT17 and SAMSN1. Found in a complex with XPO7, EIF4A1, ARHGAP1, VPS26A, VPS29 and VPS35. Interacts with GAB2. Interacts with SRPK2. Interacts with COPS6. Interacts with COP1; this interaction leads to proteasomal degradation. Interacts with the 'Thr-369' phosphorylated form of DAPK2. Interacts with PI4KB. Interacts with SLITRK1. Interacts with LRRK2; this interaction is dependent on LRRK2 phosphorylation. Interacts with PKP3 (via N-terminus); the interaction maintains the cytoplasmic pool of PKP3, facilitates PKP3 exchange at desmosomes and restricts PKP3 localization to existing desmosome cell junctions. Interacts with LCP2. Ubiquitinated. Ubiquitination by RFFL induces proteasomal degradation and indirectly regulates p53/TP53 activation. In terms of tissue distribution, present mainly in tissues enriched in stratified squamous keratinizing epithelium.

It localises to the cytoplasm. The protein resides in the nucleus. Its subcellular location is the secreted. Functionally, adapter protein implicated in the regulation of a large spectrum of both general and specialized signaling pathways. Binds to a large number of partners, usually by recognition of a phosphoserine or phosphothreonine motif. Binding generally results in the modulation of the activity of the binding partner. Promotes cytosolic retention of GBP1 GTPase by binding to phosphorylated GBP1, thereby inhibiting the innate immune response. Also acts as a TP53/p53-regulated inhibitor of G2/M progression. When bound to KRT17, regulates protein synthesis and epithelial cell growth by stimulating Akt/mTOR pathway. Acts to maintain desmosome cell junction adhesion in epithelial cells via interacting with and sequestering PKP3 to the cytoplasm, thereby restricting its translocation to existing desmosome structures and therefore maintaining desmosome protein homeostasis. Also acts to facilitate PKP3 exchange at desmosome plaques, thereby maintaining keratinocyte intercellular adhesion. May also regulate MDM2 autoubiquitination and degradation and thereby activate p53/TP53. This Homo sapiens (Human) protein is 14-3-3 protein sigma (SFN).